The primary structure comprises 107 residues: MDKMKGKKFLVFISFFIILLGILDLIMEFDHRSYIIILVGLASLFASLNISISRLAIAVCIAAAVFIEAIHVSNLHYRVILYAIGSLPLIISVGSYLKGSEKGRGMR.

The next 4 helical transmembrane spans lie at 9 to 28 (FLVFISFFIILLGILDLIME), 33 to 50 (SYIIILVGLASLFASLNI), 55 to 72 (LAIAVCIAAAVFIEAIHV), and 77 to 99 (YRVILYAIGSLPLIISVGSYLKG).

It localises to the cell membrane. This is an uncharacterized protein from Archaeoglobus fulgidus (strain ATCC 49558 / DSM 4304 / JCM 9628 / NBRC 100126 / VC-16).